The following is a 222-amino-acid chain: UPF0688 protein C1orf174 homolog (222 aa).

Disordered regions lie at residues 23 to 57 (STSL…RTSK) and 98 to 158 (EDGA…EPVP). Over residues 33–48 (ASSTSAKTTCLASSSH) the composition is skewed to polar residues. Residues 121–131 (VSEEPSVKAEE) are compositionally biased toward basic and acidic residues. Residue Ser-172 is modified to Phosphoserine.

Belongs to the UPF0688 family.

It is found in the nucleus. This chain is UPF0688 protein C1orf174 homolog, found in Rattus norvegicus (Rat).